The primary structure comprises 622 residues: Phosphomethylpyrimidine synthase (622 aa).

Substrate contacts are provided by residues Asn-226, Met-255, Tyr-284, His-320, 340–342, 381–384, and Glu-420; these read SRG and DGLR. Zn(2+) is bound at residue His-424. Tyr-447 serves as a coordination point for substrate. His-488 is a binding site for Zn(2+). [4Fe-4S] cluster contacts are provided by Cys-568, Cys-571, and Cys-576.

This sequence belongs to the ThiC family. As to quaternary structure, homodimer. [4Fe-4S] cluster is required as a cofactor.

It catalyses the reaction 5-amino-1-(5-phospho-beta-D-ribosyl)imidazole + S-adenosyl-L-methionine = 4-amino-2-methyl-5-(phosphooxymethyl)pyrimidine + CO + 5'-deoxyadenosine + formate + L-methionine + 3 H(+). The protein operates within cofactor biosynthesis; thiamine diphosphate biosynthesis. Catalyzes the synthesis of the hydroxymethylpyrimidine phosphate (HMP-P) moiety of thiamine from aminoimidazole ribotide (AIR) in a radical S-adenosyl-L-methionine (SAM)-dependent reaction. The chain is Phosphomethylpyrimidine synthase from Ruthia magnifica subsp. Calyptogena magnifica.